Reading from the N-terminus, the 205-residue chain is Urease accessory protein UreE (205 aa).

Positions 171-205 are disordered; that stretch reads AHEAHPHAHSHAGGHGHVHSGHGHGGKHGEHDAES. The span at 177 to 196 shows a compositional bias: basic residues; the sequence is HAHSHAGGHGHVHSGHGHGG.

Belongs to the UreE family.

It localises to the cytoplasm. Functionally, involved in urease metallocenter assembly. Binds nickel. Probably functions as a nickel donor during metallocenter assembly. This Bordetella bronchiseptica (strain ATCC BAA-588 / NCTC 13252 / RB50) (Alcaligenes bronchisepticus) protein is Urease accessory protein UreE.